Reading from the N-terminus, the 352-residue chain is Glycerol-1-phosphate dehydrogenase [NAD(P)+] (352 aa).

NAD(+)-binding positions include 91-95 and 113-116; these read GRVID and TVAS. Asp-118 contacts substrate. Residue Ser-122 coordinates NAD(+). Position 169 (Glu-169) interacts with substrate. Residues Glu-169 and His-249 each contribute to the Zn(2+) site. His-253 serves as a coordination point for substrate. Residue His-269 participates in Zn(2+) binding.

The protein belongs to the glycerol-1-phosphate dehydrogenase family. Homodimer. The cofactor is Zn(2+).

The protein resides in the cytoplasm. It carries out the reaction sn-glycerol 1-phosphate + NAD(+) = dihydroxyacetone phosphate + NADH + H(+). The catalysed reaction is sn-glycerol 1-phosphate + NADP(+) = dihydroxyacetone phosphate + NADPH + H(+). The protein operates within membrane lipid metabolism; glycerophospholipid metabolism. Catalyzes the NAD(P)H-dependent reduction of dihydroxyacetonephosphate (DHAP or glycerone phosphate) to glycerol 1-phosphate (G1P). The G1P thus generated is used as the glycerophosphate backbone of phospholipids in the cellular membranes of Archaea. The sequence is that of Glycerol-1-phosphate dehydrogenase [NAD(P)+] from Caldivirga maquilingensis (strain ATCC 700844 / DSM 13496 / JCM 10307 / IC-167).